The following is a 434-amino-acid chain: Methylenetetrahydrofolate--tRNA-(uracil-5-)-methyltransferase TrmFO (434 aa).

Residue 10 to 15 (GAGLAG) coordinates FAD.

Belongs to the MnmG family. TrmFO subfamily. It depends on FAD as a cofactor.

Its subcellular location is the cytoplasm. The catalysed reaction is uridine(54) in tRNA + (6R)-5,10-methylene-5,6,7,8-tetrahydrofolate + NADH + H(+) = 5-methyluridine(54) in tRNA + (6S)-5,6,7,8-tetrahydrofolate + NAD(+). The enzyme catalyses uridine(54) in tRNA + (6R)-5,10-methylene-5,6,7,8-tetrahydrofolate + NADPH + H(+) = 5-methyluridine(54) in tRNA + (6S)-5,6,7,8-tetrahydrofolate + NADP(+). In terms of biological role, catalyzes the folate-dependent formation of 5-methyl-uridine at position 54 (M-5-U54) in all tRNAs. The sequence is that of Methylenetetrahydrofolate--tRNA-(uracil-5-)-methyltransferase TrmFO from Bacillus cytotoxicus (strain DSM 22905 / CIP 110041 / 391-98 / NVH 391-98).